The following is a 95-amino-acid chain: Protein TusB (95 aa).

Belongs to the DsrH/TusB family. As to quaternary structure, heterohexamer, formed by a dimer of trimers. The hexameric TusBCD complex contains 2 copies each of TusB, TusC and TusD. The TusBCD complex interacts with TusE.

Its subcellular location is the cytoplasm. Its function is as follows. Part of a sulfur-relay system required for 2-thiolation of 5-methylaminomethyl-2-thiouridine (mnm(5)s(2)U) at tRNA wobble positions. The chain is Protein TusB from Sodalis glossinidius (strain morsitans).